We begin with the raw amino-acid sequence, 304 residues long: Ribosomal protein L11 methyltransferase (304 aa).

4 residues coordinate S-adenosyl-L-methionine: Thr152, Gly173, Asp195, and Asn234.

Belongs to the methyltransferase superfamily. PrmA family.

The protein resides in the cytoplasm. The enzyme catalyses L-lysyl-[protein] + 3 S-adenosyl-L-methionine = N(6),N(6),N(6)-trimethyl-L-lysyl-[protein] + 3 S-adenosyl-L-homocysteine + 3 H(+). Functionally, methylates ribosomal protein L11. This is Ribosomal protein L11 methyltransferase from Cupriavidus metallidurans (strain ATCC 43123 / DSM 2839 / NBRC 102507 / CH34) (Ralstonia metallidurans).